A 483-amino-acid chain; its full sequence is Cobyric acid synthase (483 aa).

The 188-residue stretch at 252-439 folds into the GATase cobBQ-type domain; sequence KLKVVVPVLT…LHGFLDSEAV (188 aa). Cysteine 333 (nucleophile) is an active-site residue. Histidine 431 is a catalytic residue.

Belongs to the CobB/CobQ family. CobQ subfamily.

It functions in the pathway cofactor biosynthesis; adenosylcobalamin biosynthesis. Catalyzes amidations at positions B, D, E, and G on adenosylcobyrinic A,C-diamide. NH(2) groups are provided by glutamine, and one molecule of ATP is hydrogenolyzed for each amidation. The chain is Cobyric acid synthase from Vibrio vulnificus (strain CMCP6).